Reading from the N-terminus, the 141-residue chain is Large ribosomal subunit protein uL11 (141 aa).

It belongs to the universal ribosomal protein uL11 family. Part of the ribosomal stalk of the 50S ribosomal subunit. Interacts with L10 and the large rRNA to form the base of the stalk. L10 forms an elongated spine to which L12 dimers bind in a sequential fashion forming a multimeric L10(L12)X complex. One or more lysine residues are methylated.

In terms of biological role, forms part of the ribosomal stalk which helps the ribosome interact with GTP-bound translation factors. The polypeptide is Large ribosomal subunit protein uL11 (Chlorobium chlorochromatii (strain CaD3)).